Reading from the N-terminus, the 41-residue chain is Large ribosomal subunit protein bL36 (41 aa).

It belongs to the bacterial ribosomal protein bL36 family.

The protein is Large ribosomal subunit protein bL36 of Zymomonas mobilis subsp. mobilis (strain ATCC 31821 / ZM4 / CP4).